A 276-amino-acid polypeptide reads, in one-letter code: 2-dehydro-3-deoxyphosphooctonate aldolase (276 aa).

Belongs to the KdsA family.

The protein localises to the cytoplasm. The catalysed reaction is D-arabinose 5-phosphate + phosphoenolpyruvate + H2O = 3-deoxy-alpha-D-manno-2-octulosonate-8-phosphate + phosphate. Its pathway is carbohydrate biosynthesis; 3-deoxy-D-manno-octulosonate biosynthesis; 3-deoxy-D-manno-octulosonate from D-ribulose 5-phosphate: step 2/3. It functions in the pathway bacterial outer membrane biogenesis; lipopolysaccharide biosynthesis. The chain is 2-dehydro-3-deoxyphosphooctonate aldolase from Helicobacter pylori (strain HPAG1).